The chain runs to 158 residues: Transcriptional regulator MraZ (158 aa).

SpoVT-AbrB domains follow at residues 5–50 and 91–134; these read IYET…GGVY and AVEC…SQSE.

Belongs to the MraZ family. Forms oligomers.

It localises to the cytoplasm. The protein localises to the nucleoid. In Geobacter metallireducens (strain ATCC 53774 / DSM 7210 / GS-15), this protein is Transcriptional regulator MraZ.